A 206-amino-acid polypeptide reads, in one-letter code: Small ribosomal subunit protein uS4 (206 aa).

One can recognise an S4 RNA-binding domain in the interval 93–153; the sequence is TRLDALVLRA…PKSQTMVPFQ (61 aa).

This sequence belongs to the universal ribosomal protein uS4 family. Part of the 30S ribosomal subunit. Contacts protein S5. The interaction surface between S4 and S5 is involved in control of translational fidelity.

One of the primary rRNA binding proteins, it binds directly to 16S rRNA where it nucleates assembly of the body of the 30S subunit. Functionally, with S5 and S12 plays an important role in translational accuracy. This chain is Small ribosomal subunit protein uS4, found in Bifidobacterium animalis subsp. lactis (strain AD011).